We begin with the raw amino-acid sequence, 292 residues long: Protease HtpX (292 aa).

2 consecutive transmembrane segments (helical) span residues 5–25 (IFLFLLTNVAVLMLAGVVMSV) and 34–54 (SGLLVMAAIFGFGGSFISLLL). Position 140 (histidine 140) interacts with Zn(2+). Glutamate 141 is a catalytic residue. Histidine 144 contributes to the Zn(2+) binding site. The next 2 membrane-spanning stretches (helical) occupy residues 155–175 (LLQGVLNTFVIVLARVVGGII) and 193–213 (IIVFVLEMVFGMFATMIAMWF). Glutamate 218 is a binding site for Zn(2+).

The protein belongs to the peptidase M48B family. The cofactor is Zn(2+).

It is found in the cell inner membrane. The sequence is that of Protease HtpX from Xanthomonas oryzae pv. oryzae (strain MAFF 311018).